The chain runs to 134 residues: MEQGLVVTQLDVQPGECVKVKGKILSDAKGFSVNVGKDSSTLMLHFNPRFDCHGDVNTVVCNSKEDGTWGEEDRKADFPFQQGDKVEICISFDAAEVKVKVPEVEFEFPNRLGMEKIQYLAVEGDFKVKAIKFS.

M1 carries the N-acetylmethionine modification. The Galectin domain maps to 4–134 (GLVVTQLDVQ…DFKVKAIKFS (131 aa)). Residue 69 to 75 (WGEEDRK) coordinates a beta-D-galactoside.

In terms of assembly, homodimer. In terms of tissue distribution, mainly in the liver (adult), mainly in the muscle (embryo).

This protein binds beta-galactoside. Its physiological function is not yet known. It may be involved in the regulation of differentiation. This chain is 16 kDa beta-galactoside-binding lectin, found in Gallus gallus (Chicken).